Reading from the N-terminus, the 67-residue chain is Small ribosomal subunit protein bS21 (67 aa).

Belongs to the bacterial ribosomal protein bS21 family.

The chain is Small ribosomal subunit protein bS21 from Oleidesulfovibrio alaskensis (strain ATCC BAA-1058 / DSM 17464 / G20) (Desulfovibrio alaskensis).